A 133-amino-acid polypeptide reads, in one-letter code: uncharacterized protein (133 aa).

This is an uncharacterized protein from Methanothermobacter marburgensis (strain ATCC BAA-927 / DSM 2133 / JCM 14651 / NBRC 100331 / OCM 82 / Marburg) (Methanobacterium thermoautotrophicum).